The primary structure comprises 776 residues: G protein-regulated inducer of neurite outgrowth 3 (776 aa).

Disordered regions lie at residues 1–37 (MGTVPDPLRSAKTSLIAASGKEDDLGEPQAASPRHRP) and 68–312 (VCEH…IKEV). Low complexity predominate over residues 101 to 118 (QLPGSSQPAASAPSSAAG). Composition is skewed to polar residues over residues 129–161 (PANQHTCQSIPGDQPNAITSSMPEDSLMRSQRT) and 193–203 (ETIQGTVQTPV). Residues 208–217 (VVSHSSSPVG) show a composition bias toward low complexity. The span at 242-274 (SGCSENKQPSVTASGPQGTTSVTPQPTPLTSEP) shows a compositional bias: polar residues. A phosphoserine mark is found at Ser332 and Ser365. 2 disordered regions span residues 518-637 (ISKA…RPSR) and 723-748 (LIKTQNSQTRRSISSDTSSNKKLRGR). Residues 520-552 (KADHSGSLDPTNKGDAREKKPASPQVVKEKEST) are compositionally biased toward basic and acidic residues. Residues 566 to 580 (PKSQESGGTESAANP) show a composition bias toward polar residues. The segment covering 604-620 (SLSLPSDPMGDSSPGSG) has biased composition (low complexity). Residues 725–742 (KTQNSQTRRSISSDTSSN) show a composition bias toward polar residues.

May be involved in neurite outgrowth. This Homo sapiens (Human) protein is G protein-regulated inducer of neurite outgrowth 3 (GPRIN3).